A 775-amino-acid polypeptide reads, in one-letter code: DENN domain-containing protein 1B (775 aa).

A uDENN domain is found at 14-143 (DLVLKVKCHA…YNHPVPKANT (130 aa)). Positions 180-316 (GLPTIPESRN…VVSALKNKLK (137 aa)) constitute a cDENN domain. Residues 318–395 (QSTATGDGVA…DGRLAKLNAG (78 aa)) form the dDENN domain. The FXDXF motif signature appears at 398–402 (FSDVF). A Phosphotyrosine modification is found at Y520. S535, S536, S549, and S552 each carry phosphoserine. Residues 566 to 575 (DLLGEILDTL) carry the Clathrin box motif. 2 disordered regions span residues 635-654 (DSAL…VSSS) and 671-706 (HLGA…KRET). Over residues 639–651 (HGKHLPPSPRKRV) the composition is skewed to basic residues. Residues S652 and S653 each carry the phosphoserine modification. Residues 695–706 (QTDKGKTEKRET) are compositionally biased toward basic and acidic residues.

As to quaternary structure, interacts with RAB35. Interacts with clathrin heavy chain/CLTC. Interacts with components of the adapter protein complex 2 (AP-2) AP2A2 and AP2B1. Interacts with CD3E. Post-translationally, phosphorylated on serine and/or threonine, possibly regulating the guanine nucleotide exchange factor (GEF) activity. Highly expressed in dendritic and natural killer cells and at lower levels in other myeloid lineage cells and in pituitary. Significantly up-regulated in effector memory T-cells as compared with naive T-cells.

It is found in the cytoplasm. The protein resides in the cytosol. It localises to the cytoplasmic vesicle. The protein localises to the clathrin-coated vesicle. Guanine nucleotide exchange factor (GEF) for RAB35 that acts as a regulator of T-cell receptor (TCR) internalization in TH2 cells. Acts by promoting the exchange of GDP to GTP, converting inactive GDP-bound RAB35 into its active GTP-bound form. Plays a role in clathrin-mediated endocytosis. Controls cytokine production in TH2 lymphocytes by controlling the rate of TCR internalization and routing to endosomes: acts by mediating clathrin-mediated endocytosis of TCR via its interaction with the adapter protein complex 2 (AP-2) and GEF activity. Dysregulation leads to impaired TCR down-modulation and recycling, affecting cytokine production in TH2 cells. The sequence is that of DENN domain-containing protein 1B from Homo sapiens (Human).